Here is a 235-residue protein sequence, read N- to C-terminus: Ion-translocating oxidoreductase complex subunit E (235 aa).

5 consecutive transmembrane segments (helical) span residues 63–83 (LGLS…ISLF), 93–113 (IPIY…LMNA), 117–137 (TLYQ…IIIG), 152–172 (IWDG…LGAL), and 206–226 (SFLL…LLAI).

This sequence belongs to the NqrDE/RnfAE family. As to quaternary structure, the complex is composed of six subunits: RnfA, RnfB, RnfC, RnfD, RnfE and RnfG.

It is found in the cell inner membrane. Part of a membrane-bound complex that couples electron transfer with translocation of ions across the membrane. In Haemophilus influenzae (strain PittEE), this protein is Ion-translocating oxidoreductase complex subunit E.